We begin with the raw amino-acid sequence, 640 residues long: 1,4-alpha-glucan branching enzyme GlgB (640 aa).

The active-site Nucleophile is Asp-318. Glu-371 acts as the Proton donor in catalysis.

The protein belongs to the glycosyl hydrolase 13 family. GlgB subfamily. As to quaternary structure, monomer.

It catalyses the reaction Transfers a segment of a (1-&gt;4)-alpha-D-glucan chain to a primary hydroxy group in a similar glucan chain.. The protein operates within glycan biosynthesis; glycogen biosynthesis. Functionally, catalyzes the formation of the alpha-1,6-glucosidic linkages in glycogen by scission of a 1,4-alpha-linked oligosaccharide from growing alpha-1,4-glucan chains and the subsequent attachment of the oligosaccharide to the alpha-1,6 position. The protein is 1,4-alpha-glucan branching enzyme GlgB of Francisella tularensis subsp. mediasiatica (strain FSC147).